The following is a 319-amino-acid chain: Acetyl-coenzyme A carboxylase carboxyl transferase subunit alpha (319 aa).

The CoA carboxyltransferase C-terminal domain maps to 35 to 296 (NIDEEVHRLR…KAQLLTDLAD (262 aa)).

This sequence belongs to the AccA family. Acetyl-CoA carboxylase is a heterohexamer composed of biotin carboxyl carrier protein (AccB), biotin carboxylase (AccC) and two subunits each of ACCase subunit alpha (AccA) and ACCase subunit beta (AccD).

The protein resides in the cytoplasm. The catalysed reaction is N(6)-carboxybiotinyl-L-lysyl-[protein] + acetyl-CoA = N(6)-biotinyl-L-lysyl-[protein] + malonyl-CoA. It participates in lipid metabolism; malonyl-CoA biosynthesis; malonyl-CoA from acetyl-CoA: step 1/1. In terms of biological role, component of the acetyl coenzyme A carboxylase (ACC) complex. First, biotin carboxylase catalyzes the carboxylation of biotin on its carrier protein (BCCP) and then the CO(2) group is transferred by the carboxyltransferase to acetyl-CoA to form malonyl-CoA. This chain is Acetyl-coenzyme A carboxylase carboxyl transferase subunit alpha, found in Escherichia coli O45:K1 (strain S88 / ExPEC).